The sequence spans 195 residues: ATP-dependent Clp protease proteolytic subunit (195 aa).

The Nucleophile role is filled by Ser98. Residue His123 is part of the active site.

This sequence belongs to the peptidase S14 family. Fourteen ClpP subunits assemble into 2 heptameric rings which stack back to back to give a disk-like structure with a central cavity, resembling the structure of eukaryotic proteasomes.

The protein localises to the cytoplasm. It catalyses the reaction Hydrolysis of proteins to small peptides in the presence of ATP and magnesium. alpha-casein is the usual test substrate. In the absence of ATP, only oligopeptides shorter than five residues are hydrolyzed (such as succinyl-Leu-Tyr-|-NHMec, and Leu-Tyr-Leu-|-Tyr-Trp, in which cleavage of the -Tyr-|-Leu- and -Tyr-|-Trp bonds also occurs).. Its function is as follows. Cleaves peptides in various proteins in a process that requires ATP hydrolysis. Has a chymotrypsin-like activity. Plays a major role in the degradation of misfolded proteins. The chain is ATP-dependent Clp protease proteolytic subunit from Staphylococcus haemolyticus (strain JCSC1435).